The chain runs to 734 residues: Polyribonucleotide nucleotidyltransferase (734 aa).

Mg(2+) is bound by residues Asp497 and Asp503. Residues Pro564–Ile623 enclose the KH domain. Residues Gly633–Lys707 form the S1 motif domain. The segment at Gly700–Arg734 is disordered. Residues Ala717–Arg734 are compositionally biased toward basic and acidic residues.

The protein belongs to the polyribonucleotide nucleotidyltransferase family. Requires Mg(2+) as cofactor.

The protein localises to the cytoplasm. The catalysed reaction is RNA(n+1) + phosphate = RNA(n) + a ribonucleoside 5'-diphosphate. In terms of biological role, involved in mRNA degradation. Catalyzes the phosphorolysis of single-stranded polyribonucleotides processively in the 3'- to 5'-direction. This Pelotomaculum thermopropionicum (strain DSM 13744 / JCM 10971 / SI) protein is Polyribonucleotide nucleotidyltransferase.